The sequence spans 265 residues: Energy-coupling factor transporter transmembrane protein EcfT (265 aa).

6 helical membrane passes run 29 to 49 (VMAF…ALMF), 63 to 83 (FLFF…TLLL), 94 to 114 (LVDL…AMMF), 117 to 137 (FVLI…IELT), 143 to 163 (ILAP…MLSI), and 243 to 263 (RFAD…LFWL).

Belongs to the energy-coupling factor EcfT family. In terms of assembly, forms a stable energy-coupling factor (ECF) transporter complex composed of 2 membrane-embedded substrate-binding proteins (S component), 2 ATP-binding proteins (A component) and 2 transmembrane proteins (T component). May be able to interact with more than 1 S component at a time.

The protein localises to the cell membrane. In terms of biological role, transmembrane (T) component of an energy-coupling factor (ECF) ABC-transporter complex. Unlike classic ABC transporters this ECF transporter provides the energy necessary to transport a number of different substrates. The chain is Energy-coupling factor transporter transmembrane protein EcfT from Listeria innocua serovar 6a (strain ATCC BAA-680 / CLIP 11262).